We begin with the raw amino-acid sequence, 356 residues long: Manganese-dependent ADP-ribose/CDP-alcohol diphosphatase (356 aa).

7 residues coordinate Zn(2+): D32, Q34, D81, N117, H253, H290, and H292.

Belongs to the ADPRibase-Mn family. In terms of assembly, monomer. Requires Mg(2+) as cofactor.

It carries out the reaction CDP-choline + H2O = phosphocholine + CMP + 2 H(+). The catalysed reaction is ADP-D-ribose + H2O = D-ribose 5-phosphate + AMP + 2 H(+). The enzyme catalyses CDP-glycerol + H2O = sn-glycerol 3-phosphate + CMP + 2 H(+). Its function is as follows. Hydrolyzes ADP-ribose, IDP-ribose, CDP-glycerol, CDP-choline and CDP-ethanolamine, but not other non-reducing ADP-sugars or CDP-glucose. This is Manganese-dependent ADP-ribose/CDP-alcohol diphosphatase (adprm) from Xenopus laevis (African clawed frog).